We begin with the raw amino-acid sequence, 155 residues long: Regulatory protein RecX (155 aa).

It belongs to the RecX family.

Its subcellular location is the cytoplasm. Modulates RecA activity. This Vibrio parahaemolyticus serotype O3:K6 (strain RIMD 2210633) protein is Regulatory protein RecX.